The chain runs to 128 residues: Ribonuclease pancreatic (128 aa).

Residues 1-25 form a disordered region; the sequence is KESSAKKFQRQHIDSSGSPSTNPNY. Residues Lys7 and Arg10 each contribute to the substrate site. His12 (proton acceptor) is an active-site residue. Polar residues predominate over residues 14–25; sequence DSSGSPSTNPNY. 4 disulfides stabilise this stretch: Cys26–Cys84, Cys40–Cys95, Cys58–Cys110, and Cys65–Cys72. Asn34 carries an N-linked (GlcNAc...) asparagine glycan. Residues 41–45, Lys66, and Arg85 each bind substrate; that span reads KPVNT. The Proton donor role is filled by His119.

This sequence belongs to the pancreatic ribonuclease family. As to quaternary structure, monomer. Interacts with and forms tight 1:1 complexes with RNH1. Dimerization of two such complexes may occur. Interaction with RNH1 inhibits this protein. Pancreas.

It is found in the secreted. The enzyme catalyses an [RNA] containing cytidine + H2O = an [RNA]-3'-cytidine-3'-phosphate + a 5'-hydroxy-ribonucleotide-3'-[RNA].. It catalyses the reaction an [RNA] containing uridine + H2O = an [RNA]-3'-uridine-3'-phosphate + a 5'-hydroxy-ribonucleotide-3'-[RNA].. Functionally, endonuclease that catalyzes the cleavage of RNA on the 3' side of pyrimidine nucleotides. Acts on single-stranded and double-stranded RNA. This is Ribonuclease pancreatic (RNASE1) from Proechimys guairae (Guaira spiny rat).